The following is a 233-amino-acid chain: Zinc metalloproteinase recombinant fibrinogenase II (233 aa).

Residues 19-215 (KYVETVFVVD…HNPECIDNEP (197 aa)) enclose the Peptidase M12B domain. Positions 22 and 106 each coordinate Ca(2+). Cystine bridges form between Cys-130/Cys-210, Cys-170/Cys-194, and Cys-172/Cys-177. His-155 contacts Zn(2+). Glu-156 is an active-site residue. Residues His-159 and His-165 each contribute to the Zn(2+) site. Asn-193 is a glycosylation site (N-linked (GlcNAc...) asparagine). Ca(2+)-binding residues include Cys-210, Asn-213, Asn-228, Leu-230, and Glu-232.

This sequence belongs to the venom metalloproteinase (M12B) family. P-III subfamily. Zn(2+) serves as cofactor. In terms of tissue distribution, expressed by the venom gland.

The protein localises to the secreted. With respect to regulation, inhibited by PMSF and EDTA. Slightly inhibited by Cu(2+) and Zn(2+). Not inhibited by aprotinin, SBTI, Ca(2+), Mg(2+), Na(+) and K(+). Snake venom zinc metalloprotease that acts at several levels. It has direct fibrino(geno)lytic activity (Aalpha chain of fibrinogen is cleaved quickly, Bbeta chain slowly, and gamma chain even more slowly) and degradation of TNF-alpha. These activities permit to protect against sepsis and disseminated intravascular coagulation. It inhibits ADP-induced platelet aggregation in human platelet-rich plasma (IC(50)=65.4 ug/ml). It decreases the activity of complement by degrading human C5, C6 and C9 in vitro, decreasing serum levels of C1q, C3 and C4 in rat, and inhibiting the MAC deposition on HUVECs membrane. This inhibition of complement protects against hyperacute rejection that is the main barrier in xenotransplantation. Has preference for Lys at the P1 position. Cleaves insulin B chain at '36-Val-|-Glu-37', '39-Leu-|-Tyr-40', and '48-Phe-|-Phe-49' bonds. Also cleaves fibronectin and type IV collagen. This is Zinc metalloproteinase recombinant fibrinogenase II from Deinagkistrodon acutus (Hundred-pace snake).